A 286-amino-acid polypeptide reads, in one-letter code: Beta-lactamase SHV-2 (286 aa).

Positions 1–21 (MRYIRLCIISLLATLPLAVHA) are cleaved as a signal peptide. The active-site Acyl-ester intermediate is S66. C73 and C119 are disulfide-bonded. The active-site Proton acceptor is the E164. Residue 230 to 232 (KTG) coordinates substrate.

It belongs to the class-A beta-lactamase family.

It catalyses the reaction a beta-lactam + H2O = a substituted beta-amino acid. In terms of biological role, this enzyme hydrolyzes cefotaxime, ceftazidime and other broad spectrum cephalosporins. The protein is Beta-lactamase SHV-2 (bla) of Klebsiella pneumoniae.